Reading from the N-terminus, the 606-residue chain is Protein couch potato (606 aa).

The Nuclear localization signal motif lies at 81–105 (IKRRPTLPQTPASAPQVLSPSPKRQ). Repeat copies occupy residues 91 to 95 (PASAP), 109 to 113 (AVSVL), 114 to 118 (PVTVP), 122 to 126 (PVSVP), 128 to 132 (PVSVP), 134 to 138 (PVSVK), and 159 to 163 (PISHP). A 7 X 5 AA approximate repeats of P-V-S-V-P region spans residues 91–164 (PASAPQVLSP…SHSHPISHPH (74 aa)). 4 disordered regions span residues 147-166 (QIAHTHQISHSHPISHPHHH), 282-311 (QQQQHILLSSGSSSSKHNSNNNSNTSAGAA), 324-365 (VPTT…TSAA), and 388-410 (PATSAVSDSNNNLNSSSSSNSNS). Over residues 344-365 (SNSATASAPTTPSPAGSVTSAA) the composition is skewed to low complexity. Residues 442–524 (RTLFVSGLPM…QTIRLEFAKS (83 aa)) enclose the RRM domain.

As to expression, expressed in neural precursors and their daughter cells in the embryonic peripheral nervous system. Less abundant in a number of glial cells in the peripheral and central nervous systems and also present at low levels in the developing gut.

The protein localises to the nucleus. In terms of biological role, may play a role in the development or function of the peripheral nervous system by regulating the processing of nervous system-specific transcripts. The polypeptide is Protein couch potato (cpo) (Drosophila melanogaster (Fruit fly)).